Reading from the N-terminus, the 137-residue chain is uncharacterized protein (137 aa).

The protein belongs to the ycf72 family.

The protein localises to the plastid. It localises to the chloroplast. This is an uncharacterized protein from Zea mays (Maize).